The primary structure comprises 193 residues: Acyl carrier protein phosphodiesterase (193 aa).

Belongs to the AcpH family.

It catalyses the reaction holo-[ACP] + H2O = apo-[ACP] + (R)-4'-phosphopantetheine + H(+). Functionally, converts holo-ACP to apo-ACP by hydrolytic cleavage of the phosphopantetheine prosthetic group from ACP. This is Acyl carrier protein phosphodiesterase from Escherichia coli O6:K15:H31 (strain 536 / UPEC).